We begin with the raw amino-acid sequence, 132 residues long: Fatty acid-binding protein, intestinal (132 aa).

Alanine 2 carries the post-translational modification N-acetylalanine. Hexadecanoate-binding residues include tryptophan 83 and arginine 107. Tetradecanoate is bound by residues tryptophan 83 and arginine 107.

It belongs to the calycin superfamily. Fatty-acid binding protein (FABP) family. Expressed in the small intestine and at much lower levels in the large intestine. Highest expression levels in the jejunum.

The protein localises to the cytoplasm. Functionally, FABPs are thought to play a role in the intracellular transport of long-chain fatty acids and their acyl-CoA esters. FABP2 is probably involved in triglyceride-rich lipoprotein synthesis. Binds saturated long-chain fatty acids with a high affinity, but binds with a lower affinity to unsaturated long-chain fatty acids. FABP2 may also help maintain energy homeostasis by functioning as a lipid sensor. The chain is Fatty acid-binding protein, intestinal (FABP2) from Homo sapiens (Human).